Reading from the N-terminus, the 367-residue chain is Outer membrane porin C (367 aa).

The first 21 residues, 1 to 21 (MKVKVLSLLVPALLVAGAANA), serve as a signal peptide directing secretion.

Belongs to the Gram-negative porin family. Homotrimer.

The protein localises to the cell outer membrane. Functionally, forms pores that allow passive diffusion of small molecules across the outer membrane. This chain is Outer membrane porin C (ompC), found in Escherichia coli O157:H7.